The following is a 63-amino-acid chain: Small ribosomal subunit protein eS17 (63 aa).

The protein belongs to the eukaryotic ribosomal protein eS17 family.

This Methanococcus vannielii (strain ATCC 35089 / DSM 1224 / JCM 13029 / OCM 148 / SB) protein is Small ribosomal subunit protein eS17.